The following is a 337-amino-acid chain: LGVCYGMMGNNLPSHSEVIQLYKSRNIGRLRLYDPNHGALNALRGSNIEVILGLPNVDVKHIASGMEHARWWVQKNVKDFWPDVKIKYIAVGNEISPVTGTSSLTSFQVPALVNIYKAVGEAGLGNDIKVSTSVDMTLIGNSYPPSQGSFRNDVRWFTDPIVGFLRDTRAPLLVNIYPYFSYSGNPGQISLPYALFTAPNAVVQDGSRQYRNLFDAMLDSVYAAMERTGGGSVGIVVSESGWPSAGAFGATQDNAATYLRNLIQHAKEGSPRKPGPIETYIFAMFDENNKNPELEKHFGLFSPNKQPKYNLNFGVSERVWDISAETNSTASSLISEM.

E94 (proton donor) is an active-site residue. Residue E239 is the Nucleophile of the active site. Positions 315–337 are cleaved as a propeptide — removed in mature form; that stretch reads VSERVWDISAETNSTASSLISEM. N-linked (GlcNAc...) asparagine glycosylation is present at N327.

The protein belongs to the glycosyl hydrolase 17 family.

It localises to the vacuole. The enzyme catalyses Hydrolysis of (1-&gt;3)-beta-D-glucosidic linkages in (1-&gt;3)-beta-D-glucans.. In terms of biological role, is thought to be an important plant defense-related product against fungal pathogens. This Solanum tuberosum (Potato) protein is Glucan endo-1,3-beta-glucosidase, basic isoform 1 (GLUB1).